We begin with the raw amino-acid sequence, 484 residues long: PTS system N-acetylmuramic acid-specific EIIBC component (484 aa).

Residues 1 to 89 (MAKITSNTVS…NQLIDSLTSG (89 aa)) form the PTS EIIB type-1 domain. The Phosphocysteine intermediate; for EIIB activity role is filled by Cys28. In terms of domain architecture, PTS EIIC type-1 spans 125 to 484 (SKFATIFTPL…FFGCKDVDLS (360 aa)). A run of 10 helical transmembrane segments spans residues 127 to 147 (FATI…LLGF), 168 to 188 (LIAY…ILIG), 194 to 214 (AFGG…LGYN), 228 to 248 (FFGF…AAII), 266 to 286 (MILT…LIIM), 310 to 330 (AAIL…QGFV), 345 to 365 (LFPI…ALYF), 379 to 399 (GAII…VTLP), 409 to 429 (IGGA…LPVG), and 451 to 471 (IFPG…VGFL).

The protein resides in the cell inner membrane. The enzyme catalyses N-acetyl-beta-D-muramate(out) + N(pros)-phospho-L-histidyl-[protein] = N-acetyl-beta-D-muramate 6-phosphate(in) + L-histidyl-[protein]. In terms of biological role, the phosphoenolpyruvate-dependent sugar phosphotransferase system (sugar PTS), a major carbohydrate active transport system, catalyzes the phosphorylation of incoming sugar substrates concomitantly with their translocation across the cell membrane. This system is involved in N-acetylmuramic acid (MurNAc) transport, yielding cytoplasmic MurNAc-6-P. Is also able to take up anhydro-N-acetylmuramic acid (anhMurNAc), but cannot phosphorylate the carbon 6, probably because of the 1,6-anhydro ring. In Vibrio parahaemolyticus serotype O3:K6 (strain RIMD 2210633), this protein is PTS system N-acetylmuramic acid-specific EIIBC component (murP).